The sequence spans 440 residues: FAD-dependent monooxygenase afoD (440 aa).

Residues 10 to 30 (PLSIAIIGGGIIGLMTALGLL) traverse the membrane as a helical segment. Residues glutamate 41, leucine 145, and aspartate 320 each contribute to the FAD site. Residue asparagine 352 is glycosylated (N-linked (GlcNAc...) asparagine).

Belongs to the paxM FAD-dependent monooxygenase family. Requires FAD as cofactor.

The protein resides in the membrane. Its function is as follows. FAD-dependent monooxygenase; part of the gene cluster that mediates the biosynthesis of asperfuranone, a probable antitumor agent. The polyketide synthase afoG is responsible for producing the 3,5-dimethyloctadienone moiety from acetyl-CoA, three malonyl-CoA, and two S-adenosyl methionines (SAM). The 3,5-dimethyloctadienone moiety is then loaded onto the SAT domain of afoE and extended with four malonyl-CoA and one SAM, which leads to the formation of 2,4-dihydroxy-6-(5,7-dimethyl-2-oxo-trans-3-trans-5-nonadienyl)-3-methylbenzaldehyde (compound 2) after reductive release and aldol condensation. AfoD is the next enzyme in the biosynthesis sequence and hydroxylates the side chain at the benzylic position of compound 2. After benzylic hydroxylation, a furan ring is formed after five-member ring hemiacetal formation and water elimination. AfoF and afoC are proposed to oxidize the R-diketone proton and to reduce the unconjugated carbonyl group, respectively, to generate asperfuranone. Since no intermediates could be isolated from afoF and afoC deletants, the sequence of these two enzymes is not fully understood. Moreover, since afoC deletant still produces a small amount of asperfuranone, other endogenous oxidoreductases might catalyze the same reaction with much less efficiency. The polypeptide is FAD-dependent monooxygenase afoD (Emericella nidulans (strain FGSC A4 / ATCC 38163 / CBS 112.46 / NRRL 194 / M139) (Aspergillus nidulans)).